Here is a 417-residue protein sequence, read N- to C-terminus: 3-oxoacyl-[acyl-carrier-protein] synthase 2 (417 aa).

A Ketosynthase family 3 (KS3) domain is found at 10 to 416; that stretch reads FPYVVVTGIA…GHNVAIAFGR (407 aa). Catalysis depends on for beta-ketoacyl synthase activity residues Cys-170, His-311, and His-346.

This sequence belongs to the thiolase-like superfamily. Beta-ketoacyl-ACP synthases family.

Its subcellular location is the cytoplasm. It carries out the reaction an ultra-long-chain di-unsaturated fatty acyl-[ACP] + malonyl-[ACP] + H(+) = a 3-oxo-ultra-long-chain di-unsaturated fatty acyl-[ACP] + holo-[ACP] + CO2. It functions in the pathway lipid metabolism; mycolic acid biosynthesis. Its function is as follows. Part of the mycobacterial fatty acid elongation system FAS-II, which is involved in mycolic acid biosynthesis. Catalyzes the elongation of long chain acyl-ACP substrates by the addition of two carbons from malonyl-ACP to an acyl acceptor. Involved in extension of the mycolate chains to full lengths and produces longer chain multiunsaturated hydrocarbons averaging 54 carbons in length. The polypeptide is 3-oxoacyl-[acyl-carrier-protein] synthase 2 (kasB) (Mycobacterium bovis (strain ATCC BAA-935 / AF2122/97)).